The sequence spans 116 residues: Large ribosomal subunit protein uL18 (116 aa).

The protein belongs to the universal ribosomal protein uL18 family. Part of the 50S ribosomal subunit; part of the 5S rRNA/L5/L18/L25 subcomplex. Contacts the 5S and 23S rRNAs.

Its function is as follows. This is one of the proteins that bind and probably mediate the attachment of the 5S RNA into the large ribosomal subunit, where it forms part of the central protuberance. The chain is Large ribosomal subunit protein uL18 from Psychromonas ingrahamii (strain DSM 17664 / CCUG 51855 / 37).